Reading from the N-terminus, the 103-residue chain is Small ribosomal subunit protein bS6c (103 aa).

It belongs to the bacterial ribosomal protein bS6 family.

The protein resides in the plastid. It is found in the chloroplast. Binds together with bS18 to 16S ribosomal RNA. The chain is Small ribosomal subunit protein bS6c from Gracilaria tenuistipitata var. liui (Red alga).